Consider the following 311-residue polypeptide: Cytosolic Fe-S cluster assembly factor Nubp1 homolog (311 aa).

The interval 1 to 21 (MQAPPPEHCPGVESEDAGKGS) is disordered. [4Fe-4S] cluster contacts are provided by Cys-9, Cys-23, Cys-26, and Cys-32. Position 63–70 (63–70 (GKGGVGKS)) interacts with ATP. Positions 240 and 243 each coordinate [4Fe-4S] cluster.

It belongs to the Mrp/NBP35 ATP-binding proteins family. NUBP1/NBP35 subfamily. In terms of assembly, heterotetramer of 2 Nubp1 and 2 Nubp2 chains. Requires [4Fe-4S] cluster as cofactor.

Its subcellular location is the cytoplasm. Component of the cytosolic iron-sulfur (Fe/S) protein assembly (CIA) machinery. Required for maturation of extramitochondrial Fe-S proteins. The Nubp1-Nubp2 heterotetramer forms a Fe-S scaffold complex, mediating the de novo assembly of an Fe-S cluster and its transfer to target apoproteins. The sequence is that of Cytosolic Fe-S cluster assembly factor Nubp1 homolog from Drosophila sechellia (Fruit fly).